The following is a 214-amino-acid chain: Ribonuclease HII (214 aa).

The RNase H type-2 domain occupies 18-208 (SRVVGVDEVG…SLLPSEAHLC (191 aa)). Residues D24, E25, and D116 each coordinate a divalent metal cation.

It belongs to the RNase HII family. Mn(2+) serves as cofactor. The cofactor is Mg(2+).

It is found in the cytoplasm. It catalyses the reaction Endonucleolytic cleavage to 5'-phosphomonoester.. In terms of biological role, endonuclease that specifically degrades the RNA of RNA-DNA hybrids. This Thermosynechococcus vestitus (strain NIES-2133 / IAM M-273 / BP-1) protein is Ribonuclease HII.